Reading from the N-terminus, the 305-residue chain is UDP-3-O-acyl-N-acetylglucosamine deacetylase (305 aa).

Positions 79, 238, and 242 each coordinate Zn(2+). H265 acts as the Proton donor in catalysis.

This sequence belongs to the LpxC family. It depends on Zn(2+) as a cofactor.

The enzyme catalyses a UDP-3-O-[(3R)-3-hydroxyacyl]-N-acetyl-alpha-D-glucosamine + H2O = a UDP-3-O-[(3R)-3-hydroxyacyl]-alpha-D-glucosamine + acetate. It functions in the pathway glycolipid biosynthesis; lipid IV(A) biosynthesis; lipid IV(A) from (3R)-3-hydroxytetradecanoyl-[acyl-carrier-protein] and UDP-N-acetyl-alpha-D-glucosamine: step 2/6. Functionally, catalyzes the hydrolysis of UDP-3-O-myristoyl-N-acetylglucosamine to form UDP-3-O-myristoylglucosamine and acetate, the committed step in lipid A biosynthesis. The chain is UDP-3-O-acyl-N-acetylglucosamine deacetylase from Erwinia tasmaniensis (strain DSM 17950 / CFBP 7177 / CIP 109463 / NCPPB 4357 / Et1/99).